The chain runs to 453 residues: Phosphoglucosamine mutase (453 aa).

The Phosphoserine intermediate role is filled by serine 100. Residues serine 100, aspartate 239, aspartate 241, and aspartate 243 each contribute to the Mg(2+) site. Serine 100 is subject to Phosphoserine.

This sequence belongs to the phosphohexose mutase family. The cofactor is Mg(2+). Activated by phosphorylation.

It catalyses the reaction alpha-D-glucosamine 1-phosphate = D-glucosamine 6-phosphate. Its function is as follows. Catalyzes the conversion of glucosamine-6-phosphate to glucosamine-1-phosphate. This is Phosphoglucosamine mutase from Buchnera aphidicola subsp. Baizongia pistaciae (strain Bp).